A 254-amino-acid chain; its full sequence is Proteasome activator complex subunit 3 (254 aa).

2 positions are modified to N6-acetyllysine: Lys6 and Lys14. Residue Lys195 is modified to N6-acetyllysine; by P300/CBP.

As to quaternary structure, homoheptamer. Acetylation at the major site Lys-195 is important for oligomerization and ability to degrade its target substrates. Deacetylated by SIRT1.

Its function is as follows. Implicated in immunoproteasome assembly and required for efficient antigen processing. The PA28 activator complex enhances the generation of class I binding peptides by altering the cleavage pattern of the proteasome. This chain is Proteasome activator complex subunit 3, found in Gallus gallus (Chicken).